Reading from the N-terminus, the 391-residue chain is Shewanella-like protein phosphatase 2 (391 aa).

Residues aspartate 61, histidine 63, aspartate 97, and asparagine 132 each coordinate Mn(2+). Histidine 133 functions as the Proton donor in the catalytic mechanism. The Mn(2+) site is built by histidine 232 and histidine 295.

This sequence belongs to the metallophosphoesterase superfamily. SLP family. It depends on Mn(2+) as a cofactor. As to expression, expressed in roots and siliques (at protein level).

The protein resides in the cytoplasm. It localises to the cytosol. Functionally, shows phosphatase activity, hydrolyzing the artificial substrate para-nitrophenylphosphate (pNPP) in vitro. In Arabidopsis thaliana (Mouse-ear cress), this protein is Shewanella-like protein phosphatase 2.